The sequence spans 512 residues: Glutamyl-tRNA(Gln) amidotransferase subunit A (512 aa).

Catalysis depends on charge relay system residues lysine 82 and serine 157. Serine 181 (acyl-ester intermediate) is an active-site residue.

This sequence belongs to the amidase family. GatA subfamily. As to quaternary structure, heterotrimer of A, B and C subunits.

The catalysed reaction is L-glutamyl-tRNA(Gln) + L-glutamine + ATP + H2O = L-glutaminyl-tRNA(Gln) + L-glutamate + ADP + phosphate + H(+). Functionally, allows the formation of correctly charged Gln-tRNA(Gln) through the transamidation of misacylated Glu-tRNA(Gln) in organisms which lack glutaminyl-tRNA synthetase. The reaction takes place in the presence of glutamine and ATP through an activated gamma-phospho-Glu-tRNA(Gln). This is Glutamyl-tRNA(Gln) amidotransferase subunit A from Bordetella petrii (strain ATCC BAA-461 / DSM 12804 / CCUG 43448).